Consider the following 187-residue polypeptide: Proline-rich protein 29 (187 aa).

Positions 133–187 are disordered; it reads HQPPWQGEPRIQHQPPASRQEEVRDVPPPPPPSATGTVGADVPPASDYYDAESLP.

In Mus musculus (Mouse), this protein is Proline-rich protein 29 (Prr29).